Consider the following 40-residue polypeptide: Photosystem II reaction center protein J (40 aa).

A helical transmembrane segment spans residues 8 to 28 (IPLWIIGTVTGIFGIGLIGIF).

This sequence belongs to the PsbJ family. PSII is composed of 1 copy each of membrane proteins PsbA, PsbB, PsbC, PsbD, PsbE, PsbF, PsbH, PsbI, PsbJ, PsbK, PsbL, PsbM, PsbT, PsbX, PsbY, PsbZ, Psb30/Ycf12, at least 3 peripheral proteins of the oxygen-evolving complex and a large number of cofactors. It forms dimeric complexes.

It is found in the plastid membrane. Its function is as follows. One of the components of the core complex of photosystem II (PSII). PSII is a light-driven water:plastoquinone oxidoreductase that uses light energy to abstract electrons from H(2)O, generating O(2) and a proton gradient subsequently used for ATP formation. It consists of a core antenna complex that captures photons, and an electron transfer chain that converts photonic excitation into a charge separation. The chain is Photosystem II reaction center protein J from Cuscuta reflexa (Southern Asian dodder).